A 542-amino-acid chain; its full sequence is Chaperonin GroEL (542 aa).

ATP is bound by residues 29 to 32 (TLGP), 86 to 90 (DGTTT), G413, 476 to 478 (NAA), and D492. The interval 522-542 (PDENGPAAVPDMGMGGMGGMM) is disordered.

The protein belongs to the chaperonin (HSP60) family. Forms a cylinder of 14 subunits composed of two heptameric rings stacked back-to-back. Interacts with the co-chaperonin GroES.

It localises to the cytoplasm. It catalyses the reaction ATP + H2O + a folded polypeptide = ADP + phosphate + an unfolded polypeptide.. In terms of biological role, together with its co-chaperonin GroES, plays an essential role in assisting protein folding. The GroEL-GroES system forms a nano-cage that allows encapsulation of the non-native substrate proteins and provides a physical environment optimized to promote and accelerate protein folding. This is Chaperonin GroEL from Listeria monocytogenes serotype 4b (strain CLIP80459).